A 263-amino-acid polypeptide reads, in one-letter code: Outer membrane protein OmpK (263 aa).

A signal peptide spans 1–20; the sequence is MRKSLLALSLLAATSAPVLA.

It belongs to the nucleoside-specific channel-forming outer membrane porin (Tsx) (TC 1.B.10) family.

The protein resides in the cell outer membrane. In terms of biological role, serves as receptor for a broad-host-range vibriophage, KVP40. This is Outer membrane protein OmpK from Vibrio parahaemolyticus.